The primary structure comprises 237 residues: 2-C-methyl-D-erythritol 4-phosphate cytidylyltransferase (237 aa).

The protein belongs to the IspD/TarI cytidylyltransferase family. IspD subfamily.

The enzyme catalyses 2-C-methyl-D-erythritol 4-phosphate + CTP + H(+) = 4-CDP-2-C-methyl-D-erythritol + diphosphate. The protein operates within isoprenoid biosynthesis; isopentenyl diphosphate biosynthesis via DXP pathway; isopentenyl diphosphate from 1-deoxy-D-xylulose 5-phosphate: step 2/6. Its function is as follows. Catalyzes the formation of 4-diphosphocytidyl-2-C-methyl-D-erythritol from CTP and 2-C-methyl-D-erythritol 4-phosphate (MEP). The sequence is that of 2-C-methyl-D-erythritol 4-phosphate cytidylyltransferase from Vibrio vulnificus (strain CMCP6).